Here is a 291-residue protein sequence, read N- to C-terminus: ATP synthase gamma chain (291 aa).

Belongs to the ATPase gamma chain family. As to quaternary structure, F-type ATPases have 2 components, CF(1) - the catalytic core - and CF(0) - the membrane proton channel. CF(1) has five subunits: alpha(3), beta(3), gamma(1), delta(1), epsilon(1). CF(0) has three main subunits: a, b and c.

It is found in the cell inner membrane. Produces ATP from ADP in the presence of a proton gradient across the membrane. The gamma chain is believed to be important in regulating ATPase activity and the flow of protons through the CF(0) complex. In Neisseria meningitidis serogroup B (strain ATCC BAA-335 / MC58), this protein is ATP synthase gamma chain.